The following is a 755-amino-acid chain: 1,4-alpha-glucan branching enzyme GlgB (755 aa).

The Nucleophile role is filled by Asp-431. Glu-484 (proton donor) is an active-site residue.

It belongs to the glycosyl hydrolase 13 family. GlgB subfamily. Monomer.

The catalysed reaction is Transfers a segment of a (1-&gt;4)-alpha-D-glucan chain to a primary hydroxy group in a similar glucan chain.. It participates in glycan biosynthesis; glycogen biosynthesis. Catalyzes the formation of the alpha-1,6-glucosidic linkages in glycogen by scission of a 1,4-alpha-linked oligosaccharide from growing alpha-1,4-glucan chains and the subsequent attachment of the oligosaccharide to the alpha-1,6 position. This chain is 1,4-alpha-glucan branching enzyme GlgB, found in Prochlorococcus marinus (strain NATL1A).